A 35-amino-acid polypeptide reads, in one-letter code: MDTRLLIVLLPIIAAASWAIYNIGKILLLQLTKRS.

At 1–4 (MDTR) the chain is on the lumenal side. A helical transmembrane segment spans residues 5 to 23 (LLIVLLPIIAAASWAIYNI). Topologically, residues 24–35 (GKILLLQLTKRS) are stromal.

The protein belongs to the PsbY family. PSII is composed of 1 copy each of membrane proteins PsbA, PsbB, PsbC, PsbD, PsbE, PsbF, PsbH, PsbI, PsbJ, PsbK, PsbL, PsbM, PsbT, PsbX, PsbY, PsbZ, Psb30/Ycf12, at least 3 peripheral proteins of the oxygen-evolving complex and a large number of cofactors. It forms dimeric complexes.

It is found in the plastid. The protein localises to the chloroplast thylakoid membrane. Its function is as follows. Loosely associated component of the core of photosystem II (PSII), it is not always seen in crystals. PSII is a light-driven water plastoquinone oxidoreductase, using light energy to abstract electrons from H(2)O, generating a proton gradient subsequently used for ATP formation. This Cyanidioschyzon merolae (strain NIES-3377 / 10D) (Unicellular red alga) protein is Photosystem II reaction center protein Y.